A 134-amino-acid chain; its full sequence is ATP synthase epsilon chain (134 aa).

The protein belongs to the ATPase epsilon chain family. In terms of assembly, F-type ATPases have 2 components, CF(1) - the catalytic core - and CF(0) - the membrane proton channel. CF(1) has five subunits: alpha(3), beta(3), gamma(1), delta(1), epsilon(1). CF(0) has three main subunits: a, b and c.

The protein localises to the cellular thylakoid membrane. Its function is as follows. Produces ATP from ADP in the presence of a proton gradient across the membrane. In Prochlorococcus marinus (strain MIT 9301), this protein is ATP synthase epsilon chain.